Consider the following 282-residue polypeptide: Protein DOG1-like 3 (282 aa).

The region spanning 11–254 (EQLQKGCYYE…HEWGRVREEQ (244 aa)) is the DOG1 domain.

In Arabidopsis thaliana (Mouse-ear cress), this protein is Protein DOG1-like 3.